A 501-amino-acid chain; its full sequence is Lysine--tRNA ligase (501 aa).

The Mg(2+) site is built by aspartate 411 and glutamate 418.

It belongs to the class-II aminoacyl-tRNA synthetase family. As to quaternary structure, homodimer. The cofactor is Mg(2+).

It localises to the cytoplasm. It catalyses the reaction tRNA(Lys) + L-lysine + ATP = L-lysyl-tRNA(Lys) + AMP + diphosphate. The protein is Lysine--tRNA ligase of Mycolicibacterium gilvum (strain PYR-GCK) (Mycobacterium gilvum (strain PYR-GCK)).